We begin with the raw amino-acid sequence, 205 residues long: MIGKLKGLIDSYGEDYVILDVQGVGYQVHCSARTLQALPQAGGAAVLSIETYVREDQIKLFGFRSDLEREWFRLLQTVQGVGAKVALAVLSTLPPADLANAIALRDKAAVARTSGVGPKVAERIVTELKDKAPAFASVDPAVVALSGALDERSAPRPVTDAISALVNLGYGQPQAAAAIASASRSAGEGAETAQLIKLGLKELSK.

Positions 1-64 (MIGKLKGLID…EDQIKLFGFR (64 aa)) are domain I. The tract at residues 65 to 143 (SDLEREWFRL…AFASVDPAVV (79 aa)) is domain II. Residues 144 to 153 (ALSGALDERS) form a flexible linker region. Residues 153–205 (SAPRPVTDAISALVNLGYGQPQAAAAIASASRSAGEGAETAQLIKLGLKELSK) are domain III.

It belongs to the RuvA family. In terms of assembly, homotetramer. Forms an RuvA(8)-RuvB(12)-Holliday junction (HJ) complex. HJ DNA is sandwiched between 2 RuvA tetramers; dsDNA enters through RuvA and exits via RuvB. An RuvB hexamer assembles on each DNA strand where it exits the tetramer. Each RuvB hexamer is contacted by two RuvA subunits (via domain III) on 2 adjacent RuvB subunits; this complex drives branch migration. In the full resolvosome a probable DNA-RuvA(4)-RuvB(12)-RuvC(2) complex forms which resolves the HJ.

The protein localises to the cytoplasm. The RuvA-RuvB-RuvC complex processes Holliday junction (HJ) DNA during genetic recombination and DNA repair, while the RuvA-RuvB complex plays an important role in the rescue of blocked DNA replication forks via replication fork reversal (RFR). RuvA specifically binds to HJ cruciform DNA, conferring on it an open structure. The RuvB hexamer acts as an ATP-dependent pump, pulling dsDNA into and through the RuvAB complex. HJ branch migration allows RuvC to scan DNA until it finds its consensus sequence, where it cleaves and resolves the cruciform DNA. The polypeptide is Holliday junction branch migration complex subunit RuvA (Rhodopseudomonas palustris (strain BisB18)).